Reading from the N-terminus, the 51-residue chain is Large ribosomal subunit protein eL39 (51 aa).

The protein belongs to the eukaryotic ribosomal protein eL39 family.

The polypeptide is Large ribosomal subunit protein eL39 (Staphylothermus marinus (strain ATCC 43588 / DSM 3639 / JCM 9404 / F1)).